The sequence spans 551 residues: Hydroxylamine reductase (551 aa).

The [2Fe-2S] cluster site is built by C3, C6, C18, and C25. H249, E273, C317, C405, C433, C459, E493, and K495 together coordinate hybrid [4Fe-2O-2S] cluster. C405 carries the post-translational modification Cysteine persulfide.

The protein belongs to the HCP family. [2Fe-2S] cluster serves as cofactor. Hybrid [4Fe-2O-2S] cluster is required as a cofactor.

It is found in the cytoplasm. It carries out the reaction A + NH4(+) + H2O = hydroxylamine + AH2 + H(+). Functionally, catalyzes the reduction of hydroxylamine to form NH(3) and H(2)O. The polypeptide is Hydroxylamine reductase (Actinobacillus pleuropneumoniae serotype 7 (strain AP76)).